The chain runs to 830 residues: Serine/threonine-protein kinase pkn2 (830 aa).

The Cytoplasmic segment spans residues 1 to 605 (MLAPDSLVLD…GELLRQRRRE (605 aa)). The region spanning 13–283 (FRVLRPLGSG…DALAAAHSAL (271 aa)) is the Protein kinase domain. Residues 19–27 (LGSGGMGEV) and Lys42 each bind ATP. Catalysis depends on Asp135, which acts as the Proton acceptor. Positions 296 to 326 (VPQPGSGATPSSGTSVFGTGSASGSSSGPTG) are disordered. Low complexity predominate over residues 299–326 (PGSGATPSSGTSVFGTGSASGSSSGPTG). The 116-residue stretch at 396–511 (TVMLTDIQGF…EPMEVIEAVE (116 aa)) folds into the Guanylate cyclase domain. A helical membrane pass occupies residues 606 to 623 (AALVAGAVVLLGAGAAWL). Residues 624–830 (SQRNDAGTRA…AIKSLKQKSD (207 aa)) are Periplasmic-facing.

Belongs to the protein kinase superfamily. Ser/Thr protein kinase family.

The protein localises to the cell membrane. It carries out the reaction L-seryl-[protein] + ATP = O-phospho-L-seryl-[protein] + ADP + H(+). It catalyses the reaction L-threonyl-[protein] + ATP = O-phospho-L-threonyl-[protein] + ADP + H(+). Its function is as follows. Regulates the activity of endogenous beta-lactamase or related enzymes, by blocking their secretion by phosphorylation, in response to an external signal yet to be identified. This is Serine/threonine-protein kinase pkn2 (pkn2) from Myxococcus xanthus.